Reading from the N-terminus, the 592-residue chain is Aspartate--tRNA(Asp/Asn) ligase (592 aa).

Residue Glu-176 coordinates L-aspartate. The interval 200–203 (QLYK) is aspartate. Residue Arg-222 coordinates L-aspartate. ATP is bound by residues 222 to 224 (RDE) and Gln-231. Residue His-452 coordinates L-aspartate. Glu-486 is a binding site for ATP. L-aspartate is bound at residue Arg-493. 538-541 (GVDR) provides a ligand contact to ATP.

Belongs to the class-II aminoacyl-tRNA synthetase family. Type 1 subfamily. As to quaternary structure, homodimer.

Its subcellular location is the cytoplasm. The catalysed reaction is tRNA(Asx) + L-aspartate + ATP = L-aspartyl-tRNA(Asx) + AMP + diphosphate. Its function is as follows. Aspartyl-tRNA synthetase with relaxed tRNA specificity since it is able to aspartylate not only its cognate tRNA(Asp) but also tRNA(Asn). Reaction proceeds in two steps: L-aspartate is first activated by ATP to form Asp-AMP and then transferred to the acceptor end of tRNA(Asp/Asn). The chain is Aspartate--tRNA(Asp/Asn) ligase from Rhodopirellula baltica (strain DSM 10527 / NCIMB 13988 / SH1).